We begin with the raw amino-acid sequence, 102 residues long: Small ribosomal subunit protein uS10 (102 aa).

It belongs to the universal ribosomal protein uS10 family. Part of the 30S ribosomal subunit.

Functionally, involved in the binding of tRNA to the ribosomes. The protein is Small ribosomal subunit protein uS10 of Acidothermus cellulolyticus (strain ATCC 43068 / DSM 8971 / 11B).